The chain runs to 142 residues: Large ribosomal subunit protein uL13 (142 aa).

Belongs to the universal ribosomal protein uL13 family. As to quaternary structure, part of the 50S ribosomal subunit.

In terms of biological role, this protein is one of the early assembly proteins of the 50S ribosomal subunit, although it is not seen to bind rRNA by itself. It is important during the early stages of 50S assembly. The protein is Large ribosomal subunit protein uL13 of Chromobacterium violaceum (strain ATCC 12472 / DSM 30191 / JCM 1249 / CCUG 213 / NBRC 12614 / NCIMB 9131 / NCTC 9757 / MK).